Consider the following 321-residue polypeptide: Lipoyl synthase (321 aa).

[4Fe-4S] cluster-binding residues include C68, C73, C79, C94, C98, C101, and S308. The Radical SAM core domain maps to 80–297 (FNHGTATFMI…REFAESIGFT (218 aa)).

Belongs to the radical SAM superfamily. Lipoyl synthase family. Requires [4Fe-4S] cluster as cofactor.

It localises to the cytoplasm. It carries out the reaction [[Fe-S] cluster scaffold protein carrying a second [4Fe-4S](2+) cluster] + N(6)-octanoyl-L-lysyl-[protein] + 2 oxidized [2Fe-2S]-[ferredoxin] + 2 S-adenosyl-L-methionine + 4 H(+) = [[Fe-S] cluster scaffold protein] + N(6)-[(R)-dihydrolipoyl]-L-lysyl-[protein] + 4 Fe(3+) + 2 hydrogen sulfide + 2 5'-deoxyadenosine + 2 L-methionine + 2 reduced [2Fe-2S]-[ferredoxin]. It functions in the pathway protein modification; protein lipoylation via endogenous pathway; protein N(6)-(lipoyl)lysine from octanoyl-[acyl-carrier-protein]: step 2/2. In terms of biological role, catalyzes the radical-mediated insertion of two sulfur atoms into the C-6 and C-8 positions of the octanoyl moiety bound to the lipoyl domains of lipoate-dependent enzymes, thereby converting the octanoylated domains into lipoylated derivatives. The protein is Lipoyl synthase of Shewanella sediminis (strain HAW-EB3).